A 767-amino-acid polypeptide reads, in one-letter code: Transducin-like enhancer protein 2 (767 aa).

The interval 1–152 is q domain; that stretch reads MYPQGRHPTP…SLLGQQNQLQ (152 aa). The segment at 153–215 is GP domain; that stretch reads PLSHAPPVPL…SRVDRAASRS (63 aa). The segment covering 198–212 has biased composition (basic and acidic residues); that stretch reads RVGVDAEGSRVDRAA. 3 disordered regions span residues 198–257, 264–283, and 296–346; these read RVGV…EEDK, VDED…CGKA, and SPAS…SSAS. A ccN domain region spans residues 216 to 279; that stretch reads SSPSPPESLV…SEPPSPVTTP (64 aa). The short motif at 238–242 is the Nuclear localization signal element; it reads KQQRA. Position 253 is a phosphoserine; by CK2 (Ser-253). A Phosphoserine; by CDK1 modification is found at Ser-274. At Thr-278 the chain carries Phosphothreonine; by CDK1. An SP domain region spans residues 280-447; the sequence is CGKAPLCIPA…VAKPAYSFHV (168 aa). A compositionally biased stretch (low complexity) spans 296–309; the sequence is SPASLASSLGSPLP. The residue at position 306 (Ser-306) is a Phosphoserine. Residues 323 to 346 show a composition bias toward polar residues; it reads TPASRSCGTSPPQDSSTPGPSSAS. 6 WD repeats span residues 479–517, 525–564, 569–608, 611–650, 693–732, and 734–766; these read AHGE…SKTP, NRDN…PRIK, SSAP…MVRQ, GHTD…QLQQ, LHES…SIFQ, and KESS…YEVV.

Belongs to the WD repeat Groucho/TLE family. Homooligomer and heterooligomer with other family members. Binds LEF1, TCF7, TCF7L1, TCF7L2, UTY, HES1 and HES5. Post-translationally, ubiquitinated by XIAP/BIRC4. In terms of tissue distribution, expressed in bone marrow-derived macrophages.

The protein resides in the nucleus. Functionally, transcriptional corepressor that binds to a number of transcription factors. Inhibits the transcriptional activation mediated by CTNNB1 and TCF family members in Wnt signaling. The effects of full-length TLE family members may be modulated by association with dominant-negative AES. The sequence is that of Transducin-like enhancer protein 2 (Tle2) from Mus musculus (Mouse).